The primary structure comprises 515 residues: Leucine-rich repeat transmembrane neuronal protein 2 (515 aa).

The signal sequence occupies residues 1-33; it reads MGLHFKWPLGAPMLAAIYAMSVVLKMLPALGMA. The 28-residue stretch at 34 to 61 folds into the LRRNT domain; sequence CPPKCRCEKLLFYCDSQGFHSVPNATDK. The Extracellular portion of the chain corresponds to 34-421; that stretch reads CPPKCRCEKL…EPDNAIFTQR (388 aa). Residue asparagine 57 is glycosylated (N-linked (GlcNAc...) asparagine). LRR repeat units follow at residues 63 to 83, 86 to 107, 110 to 131, 134 to 155, 158 to 179, 182 to 203, 206 to 227, 230 to 251, 254 to 275, and 278 to 299; these read SLGL…QFAS, QLTW…AFQG, KLKE…TFTQ, NLQN…LFYG, KLQT…LFWD, SLEF…GFAG, KLRE…HFLR, SLHT…MDWT, TLEK…VFET, and NLKI…ILNS. Asparagine 126 carries N-linked (GlcNAc...) asparagine glycosylation. Asparagine 243 carries N-linked (GlcNAc...) asparagine glycosylation. One can recognise an LRRCT domain in the interval 311-362; that stretch reads NLWECSPRVCALASWLGSFQGRWEHSILCHSPDHTQGEDILDAVHGFQLCWN. Asparagine 362 carries an N-linked (GlcNAc...) asparagine glycan. A helical transmembrane segment spans residues 422–442; that stretch reads VITGTMALLFSFFFIIFIVFI. The Cytoplasmic segment spans residues 443–515; sequence SRKCCPPTLR…QQLPYKECEV (73 aa). The Involved in DLG4-binding motif lies at 512-515; sequence ECEV.

The protein belongs to the LRRTM family. Interacts with DLG4. Interacts with neurexin NRXN1; interaction is mediated by heparan sulfate glycan modification on neurexin. As to expression, expressed in neuronal tissues.

The protein resides in the cell membrane. Its subcellular location is the postsynaptic cell membrane. Its function is as follows. Involved in the development and maintenance of excitatory synapses in the vertebrate nervous system. Regulates surface expression of AMPA receptors and instructs the development of functional glutamate release sites. Acts as a ligand for the presynaptic receptors NRXN1-A and NRXN1-B. The sequence is that of Leucine-rich repeat transmembrane neuronal protein 2 (Lrrtm2) from Mus musculus (Mouse).